The chain runs to 86 residues: uncharacterized protein (86 aa).

A disordered region spans residues 1–21; that stretch reads MLSNSTSRNRHSKHNKKNTRE. The span at 8–17 shows a compositional bias: basic residues; it reads RNRHSKHNKK.

This is an uncharacterized protein from Acidianus convivator (ATV).